A 371-amino-acid chain; its full sequence is N-acetyldiaminopimelate deacetylase (371 aa).

Residue D68 is part of the active site. Residue E127 is the Proton acceptor of the active site.

It belongs to the peptidase M20A family. N-acetyldiaminopimelate deacetylase subfamily.

It carries out the reaction N-acetyl-(2S,6S)-2,6-diaminopimelate + H2O = (2S,6S)-2,6-diaminopimelate + acetate. It functions in the pathway amino-acid biosynthesis; L-lysine biosynthesis via DAP pathway; LL-2,6-diaminopimelate from (S)-tetrahydrodipicolinate (acetylase route): step 3/3. Its function is as follows. Catalyzes the conversion of N-acetyl-diaminopimelate to diaminopimelate and acetate. This is N-acetyldiaminopimelate deacetylase from Halalkalibacterium halodurans (strain ATCC BAA-125 / DSM 18197 / FERM 7344 / JCM 9153 / C-125) (Bacillus halodurans).